The following is a 296-amino-acid chain: LysM and putative peptidoglycan-binding domain-containing protein 4 (296 aa).

The Extracellular segment spans residues 1–217 (MRHKELLSKT…PMDGADCGIQ (217 aa)). N-linked (GlcNAc...) asparagine glycosylation occurs at N30. In terms of domain architecture, LysM spans 74-118 (LQRELAQEDSLNKLALQYGCKVADIKKVNNFIREQDLYALKSIKS). Residues 218 to 238 (WWNAVFIMLLIGIVLPIFYLV) form a helical membrane-spanning segment. Over 239 to 296 (YFKIQASGETPNSLNTAAIPNGSMAMGTVPGQAPRLAVAVPTVPSADSQFSQTTQAGN) the chain is Cytoplasmic.

It is found in the membrane. The polypeptide is LysM and putative peptidoglycan-binding domain-containing protein 4 (LYSMD4) (Pongo abelii (Sumatran orangutan)).